The sequence spans 469 residues: ATP-dependent protease ATPase subunit HslU (469 aa).

ATP-binding positions include Ile24 and 66 to 71 (GVGKTE). The tract at residues 159–179 (LFGSMNQPDEPAEEEVDQELK) is disordered. Residues Asp282, Glu347, and Arg419 each coordinate ATP.

The protein belongs to the ClpX chaperone family. HslU subfamily. In terms of assembly, a double ring-shaped homohexamer of HslV is capped on each side by a ring-shaped HslU homohexamer. The assembly of the HslU/HslV complex is dependent on binding of ATP.

The protein localises to the cytoplasm. Its function is as follows. ATPase subunit of a proteasome-like degradation complex; this subunit has chaperone activity. The binding of ATP and its subsequent hydrolysis by HslU are essential for unfolding of protein substrates subsequently hydrolyzed by HslV. HslU recognizes the N-terminal part of its protein substrates and unfolds these before they are guided to HslV for hydrolysis. The chain is ATP-dependent protease ATPase subunit HslU from Listeria innocua serovar 6a (strain ATCC BAA-680 / CLIP 11262).